Consider the following 417-residue polypeptide: Fatty-acid peroxygenase (417 aa).

A heme-binding site is contributed by Cys363.

Belongs to the cytochrome P450 family. Heme is required as a cofactor.

It carries out the reaction a 1,2-saturated fatty acid + H2O2 = a 2-hydroxy fatty acid + H2O. The enzyme catalyses a 2,3-saturated fatty acid + H2O2 = a 3-hydroxy fatty acid + H2O. The catalysed reaction is tetradecanoate + H2O2 = (3R)-hydroxytetradecanoate + H2O. It catalyses the reaction tetradecanoate + H2O2 = (2R)-hydroxytetradecanoate + H2O. It carries out the reaction tetradecanoate + H2O2 = (2S)-hydroxytetradecanoate + H2O. In terms of biological role, catalyzes the alpha- and beta-hydroxylation of myristic acid in the presence of hydrogen peroxide. The sequence is that of Fatty-acid peroxygenase (cypC) from Bacillus subtilis (strain 168).